The chain runs to 62 residues: Conotoxin Tx5.1 (62 aa).

An N-terminal signal peptide occupies residues 1–22 (MCCLPVFVILLLLIASAPSVDA). A propeptide spanning residues 23–49 (QPKTKDDVPLAPLHDNAKSALQHLNQR) is cleaved from the precursor. Glutamine 60 is modified (glutamine amide).

The protein belongs to the conotoxin T superfamily. Contains 2 disulfide bonds that can be either 'C1-C3, C2-C4' or 'C1-C4, C2-C3', since these disulfide connectivities have been observed for conotoxins with cysteine framework V (for examples, see AC P0DQQ7 and AC P81755). As to expression, expressed by the venom duct.

It is found in the secreted. The chain is Conotoxin Tx5.1 from Conus textile (Cloth-of-gold cone).